Consider the following 286-residue polypeptide: 2-hydroxy-6-oxo-6-phenylhexa-2,4-dienoate hydrolase (286 aa).

The AB hydrolase-1 domain maps to 36 to 271; sequence VIMLHGGGPG…KCGHWAQWEH (236 aa). Substrate is bound by residues 42–43, Asn51, Asn111, Ser180, and Arg190; that span reads GG. His265 acts as the Proton acceptor in catalysis. Trp266 is a binding site for substrate.

The protein belongs to the AB hydrolase superfamily. BphD family. In terms of assembly, homodimer.

It carries out the reaction 2,6-dioxo-6-phenylhexa-3-enoate + H2O = 2-oxopent-4-enoate + benzoate + H(+). It functions in the pathway xenobiotic degradation; biphenyl degradation; 2-hydroxy-2,4-pentadienoate and benzoate from biphenyl: step 4/4. Functionally, catalyzes an unusual C-C bond hydrolysis of 2-hydroxy-6-oxo-6-phenylhexa-2,4-dienoic acid (HOPDA) to produce benzoic acid and 2-hydroxy-2,4-pentadienoic acid (HPD). The protein is 2-hydroxy-6-oxo-6-phenylhexa-2,4-dienoate hydrolase (bphD) of Metapseudomonas furukawaii (Pseudomonas furukawaii).